Consider the following 507-residue polypeptide: Histidine ammonia-lyase (507 aa).

A cross-link (5-imidazolinone (Ala-Gly)) is located at residues 141–143 (ASG). A 2,3-didehydroalanine (Ser) modification is found at S142.

Belongs to the PAL/histidase family. In terms of processing, contains an active site 4-methylidene-imidazol-5-one (MIO), which is formed autocatalytically by cyclization and dehydration of residues Ala-Ser-Gly.

Its subcellular location is the cytoplasm. It carries out the reaction L-histidine = trans-urocanate + NH4(+). Its pathway is amino-acid degradation; L-histidine degradation into L-glutamate; N-formimidoyl-L-glutamate from L-histidine: step 1/3. The sequence is that of Histidine ammonia-lyase from Burkholderia orbicola (strain MC0-3).